Reading from the N-terminus, the 106-residue chain is Transcription initiation factor IIA subunit 2 (106 aa).

Belongs to the TFIIA subunit 2 family. TFIIA is a heterodimer of the large unprocessed subunit 1 and a small subunit gamma. It was originally believed to be a heterotrimer of an alpha, a beta and a gamma subunit.

The protein resides in the nucleus. In terms of biological role, TFIIA is a component of the transcription machinery of RNA polymerase II and plays an important role in transcriptional activation. TFIIA in a complex with TBP mediates transcriptional activity. In Arabidopsis thaliana (Mouse-ear cress), this protein is Transcription initiation factor IIA subunit 2 (TFIIA-S).